A 230-amino-acid polypeptide reads, in one-letter code: Acyl-protein thioesterase 1 (230 aa).

Active-site charge relay system residues include Ser-119, Asp-174, and His-208. An N6-acetyllysine modification is found at Lys-224.

Belongs to the AB hydrolase superfamily. AB hydrolase 2 family. In terms of assembly, homodimer.

The protein resides in the cytoplasm. It is found in the cell membrane. It localises to the nucleus membrane. Its subcellular location is the endoplasmic reticulum. It catalyses the reaction S-hexadecanoyl-L-cysteinyl-[protein] + H2O = L-cysteinyl-[protein] + hexadecanoate + H(+). It carries out the reaction 1-hexadecanoyl-sn-glycero-3-phosphocholine + H2O = sn-glycerol 3-phosphocholine + hexadecanoate + H(+). The catalysed reaction is a 1-(9Z-octadecenoyl)-2-acyl-sn-glycero-3-phosphocholine + H2O = a 2-acyl-sn-glycero-3-phosphocholine + (9Z)-octadecenoate + H(+). In terms of biological role, acts as an acyl-protein thioesterase. Hydrolyzes fatty acids from S-acylated cysteine residues in proteins such as trimeric G alpha proteins or HRAS. Acts as a palmitoyl thioesterase that catalyzes depalmitoylation of proteins, such as ADRB2, KCNMA1 and SQSTM1. Acts as a negative regulator of autophagy by mediating palmitoylation of SQSTM1, decreasing affinity between SQSTM1 and ATG8 proteins and recruitment of ubiquitinated cargo proteins to autophagosomes. Acts as a lysophospholipase and hydrolyzes lysophosphatidylcholine (lyso-PC). Also hydrolyzes lysophosphatidylethanolamine (lyso-PE), lysophosphatidylinositol (lyso-PI) and lysophosphatidylserine (lyso-PS). Has much higher thioesterase activity than lysophospholipase activity. Contributes to the production of lysophosphatidic acid (LPA) during blood coagulation by recognizing and cleaving plasma phospholipids to generate lysophospholipids which in turn act as substrates for ENPP2 to produce LPA. This chain is Acyl-protein thioesterase 1 (LYPLA1), found in Pongo abelii (Sumatran orangutan).